Consider the following 256-residue polypeptide: MAKLLLFLLPAILGLLVPRSAVALGTNYLLSGQTLDTEGHLKNGDFDLVMQDDCNLVLYNGNWQSNTANNGRDCKLTLTDYGELVIKNGDGSTVWKSGAQSVKGNYAAVVHPDGRLVVLGPSVFKIDPWVRGLNSLRFRNIPFTNNLLFSGQVLYGDGRLTAKNHQLVMQGDCNLVLYGGKYGWQSNTHGNGEHCFLRLNHKGELIIKDDDFKTIWSSRSSSKQGEYVLILQDDGFGVIYGPAIFETSSKRSIAAS.

The N-terminal stretch at 1 to 23 (MAKLLLFLLPAILGLLVPRSAVA) is a signal peptide. 2 consecutive Bulb-type lectin domains span residues 26–131 (TNYL…PWVR) and 145–252 (NNLL…SKRS). Residues 51–55 (QDDCN), Tyr-59, Trp-63, Gln-64, 170–174 (QGDCN), Tyr-178, and 182–185 (YGWQ) each bind beta-D-mannose. The Carbohydrate-binding motif 1 signature appears at 51–59 (QDDCNLVLY). Cystine bridges form between Cys-54–Cys-74 and Cys-173–Cys-195. Residues 170 to 178 (QGDCNLVLY) carry the Carbohydrate-binding motif 2 motif.

As to quaternary structure, forms heterodimers.

The protein localises to the secreted. Functionally, mannose-specific lectin. Shows agglutinating activity towards erythrocytes from rabbit. The chain is Mannose-specific lectin 1 from Remusatia vivipara (Hitchhiker elephant ear).